Consider the following 346-residue polypeptide: [LysW]-lysine/[LysW]-ornithine hydrolase (346 aa).

His-68 provides a ligand contact to Zn(2+). Asp-70 is an active-site residue. Asp-92 contacts Zn(2+). Glu-122 serves as the catalytic Proton acceptor. Positions 123, 146, and 317 each coordinate Zn(2+).

It belongs to the peptidase M20A family. LysK subfamily. Zn(2+) is required as a cofactor. Requires Co(2+) as cofactor.

It localises to the cytoplasm. It carries out the reaction [amino-group carrier protein]-C-terminal-gamma-(L-lysyl)-L-glutamate + H2O = [amino-group carrier protein]-C-terminal-L-glutamate + L-lysine. The catalysed reaction is [amino-group carrier protein]-C-terminal-gamma-(L-ornithyl)-L-glutamate + H2O = [amino-group carrier protein]-C-terminal-L-glutamate + L-ornithine. It functions in the pathway amino-acid biosynthesis; L-lysine biosynthesis via AAA pathway; L-lysine from L-alpha-aminoadipate (Thermus route): step 5/5. It participates in amino-acid biosynthesis; L-arginine biosynthesis. Functionally, catalyzes the release of L-lysine from [LysW]-gamma-L-lysine and the release of L-ornithine from [LysW]-L-ornithine. The chain is [LysW]-lysine/[LysW]-ornithine hydrolase from Saccharolobus solfataricus (strain ATCC 35092 / DSM 1617 / JCM 11322 / P2) (Sulfolobus solfataricus).